Reading from the N-terminus, the 520-residue chain is Probable protein phosphatase 2C 39 (520 aa).

The 348-residue stretch at 160–507 (FLTSTEIKMA…DDVTIIVIIL (348 aa)) folds into the PPM-type phosphatase domain. Residues aspartate 195, glycine 196, aspartate 435, and aspartate 498 each coordinate Mn(2+).

Belongs to the PP2C family. Mg(2+) is required as a cofactor. The cofactor is Mn(2+).

It catalyses the reaction O-phospho-L-seryl-[protein] + H2O = L-seryl-[protein] + phosphate. The enzyme catalyses O-phospho-L-threonyl-[protein] + H2O = L-threonyl-[protein] + phosphate. This is Probable protein phosphatase 2C 39 from Oryza sativa subsp. japonica (Rice).